Consider the following 59-residue polypeptide: Antitoxin RelB4 (59 aa).

The interval 38–59 (VGEWLKTLGTPHQTPPPYSWRK) is disordered. Positions 50–59 (QTPPPYSWRK) are enriched in pro residues.

In terms of biological role, antitoxin component of a type II toxin-antitoxin (TA) system. Neutralizes the effect of cognate toxin RelE4, but no other RelE or ParE toxin. The chain is Antitoxin RelB4 (relB4) from Caulobacter vibrioides (strain ATCC 19089 / CIP 103742 / CB 15) (Caulobacter crescentus).